We begin with the raw amino-acid sequence, 338 residues long: Taste receptor type 2 member 39 (338 aa).

At 1–30 (MLGRCFPPDTKEKQQLRMTKLCDPAESELS) the chain is on the extracellular side. The helical transmembrane segment at 31–51 (PFLITLILAVLLAEYLIGIIA) threads the bilayer. Over 52-74 (NGFIMAIHAAEWVQNKAVSTSGR) the chain is Cytoplasmic. A helical transmembrane segment spans residues 75–95 (ILVFLSVSRIALQSLMMLEIT). Residues 96 to 116 (ISSTSLSFYSEDAVYYAFKIS) are Extracellular-facing. A helical transmembrane segment spans residues 117-137 (FIFLNFCSLWFAAWLSFFYFV). At 138 to 156 (KIANFSYPLFLKLRWRITG) the chain is on the cytoplasmic side. Residues 157 to 177 (LIPWLLWLSVFISFSHSMFCI) form a helical membrane-spanning segment. The Extracellular segment spans residues 178-205 (NICTVYCNNSFPIHSSNSTKKTYLSEIN). N-linked (GlcNAc...) asparagine glycans are attached at residues Asn-185 and Asn-194. The helical transmembrane segment at 206–226 (VVGLAFFFNLGIVTPLIMFIL) threads the bilayer. Residues 227–262 (TATLLILSLKRHTLHMGSNATGSNDPSMEAHMGAIK) are Cytoplasmic-facing. Residues 263 to 283 (AISYFLILYIFNAVALFIYLS) form a helical membrane-spanning segment. Topologically, residues 284-291 (NMFDINSL) are extracellular. Residues 292-312 (WNNLCQIIMAAYPASHSILLI) form a helical membrane-spanning segment. The Cytoplasmic segment spans residues 313–338 (QDNPGLRRAWKRLQLRLHLYPKEWTL).

It belongs to the G-protein coupled receptor T2R family. As to expression, expressed in subsets of taste receptor cells of the tongue and exclusively in gustducin-positive cells.

The protein localises to the membrane. In terms of biological role, receptor that may play a role in the perception of bitterness and is gustducin-linked. May play a role in sensing the chemical composition of the gastrointestinal content. The activity of this receptor may stimulate alpha gustducin, mediate PLC-beta-2 activation and lead to the gating of TRPM5. The polypeptide is Taste receptor type 2 member 39 (TAS2R39) (Homo sapiens (Human)).